Here is a 1122-residue protein sequence, read N- to C-terminus: AP-4 complex subunit epsilon-1 (1122 aa).

Position 699 is a phosphoserine (Ser699). 2 stretches are compositionally biased toward basic and acidic residues: residues 714–728 (YLPK…KPEA) and 745–760 (TTRK…STEE). Disordered regions lie at residues 714–760 (YLPK…STEE) and 797–861 (SKLK…AEKL). The interaction with TEPSIN stretch occupies residues 726-1122 (PEASHVPAEG…CHCQKVMQTS (397 aa)). A compositionally biased stretch (low complexity) spans 841–853 (ELSSELFRSESLS). Position 851 is a phosphoserine (Ser851).

The protein belongs to the adaptor complexes large subunit family. In terms of assembly, adaptor protein complex 4 (AP-4) is a heterotetramer composed of two large adaptins (epsilon-type subunit AP4E1 and beta-type subunit AP4B1), a medium adaptin (mu-type subunit AP4M1) and a small adaptin (sigma-type AP4S1). Interacts with TEPSIN. Interacts with GRIA2; probably indirect it mediates the somatodendritic localization of GRIA2 in neurons.

It localises to the golgi apparatus. The protein resides in the trans-Golgi network membrane. Component of the adaptor protein complex 4 (AP-4). Adaptor protein complexes are vesicle coat components involved both in vesicle formation and cargo selection. They control the vesicular transport of proteins in different trafficking pathways. AP-4 forms a non clathrin-associated coat on vesicles departing the trans-Golgi network (TGN) and may be involved in the targeting of proteins from the trans-Golgi network (TGN) to the endosomal-lysosomal system. It is also involved in protein sorting to the basolateral membrane in epithelial cells and the proper asymmetric localization of somatodendritic proteins in neurons. AP-4 is involved in the recognition and binding of tyrosine-based sorting signals found in the cytoplasmic part of cargos, but may also recognize other types of sorting signal. This chain is AP-4 complex subunit epsilon-1, found in Mus musculus (Mouse).